The primary structure comprises 913 residues: MFAPLLKKLFGSKNEREVKRMLKAVQSVNALEEQMLSLSDEQLRSKTEEFKARLEKGETLDQILPEAFAVCREAGKRVMGMRHFDVQLIGGMTLHEGRIAEMRTGEGKTLVATLAVYLNALAGKGVHVVTVNDYLARRDANWMRPLYEFLGLSVGIVTPFQPPEEKRAAYASDITYGTNNEFGFDYLRDNMAFSLQEKNQRELNFAVIDEVDSILIDEARTPLIISGQAEDSSKLYQQINLLIPRLTQHIEEEEGVVTQEGHFSIDEKTRQVELNEQGHQYIEELLTQAGLLAEGESLYSAHNLGLLTHVYSGLRAHKLFHRNVEYIVQNNQVLLIDEHTGRTMPGRRLSEGLHQAIEAKEGLQIQPESQTLASTTFQNYFRLYKKLAGMTGTADTEAFEFQQIYSLPVVVIPTNKPLARKDFNDLVYLTQEEKFAAIIADIKECRNQGRPVLVGTATIESSEYVSRLLEAEGFEHKVLNAKHHDKEAEIIAQAGRPGAVTIATNMAGRGTDILLGGNWEVEVAALENATEEQIAQIKADWQKRHQQVLEAGGLHVIASERHESRRIDNQLRGRAGRQGDPGSSRFYLSLEDSLMRIFASDRVKNFMKALGMESGEAIEHRMVTNAIEKAQRKVEGRNFDMRKQLLEYDDVANEQRKVIYHMRNSLLAADEIGQTIAEFRQEALDAAISAHIPPQSLPEQWDIPGLEAVLYSDFGTRLPIQQWLDEDEKLYEETLREKILQALLDAYNEKEDMAGAEALRSFEKQIVLRVLDDLWKDHLSTMDHLRHGIHLRGYAQKNPKQEYKRESFTLFQDLLESIKRDSIRVLSHVQVRREDPAEEEARLRHEAEELAKRMQFQHAEVSALDQPEEEPAEVEGQPDVAVASVRTEPKIGRNEPCPCGSGKKYKHCHGQVQ.

ATP contacts are provided by residues Q87, 105–109 (GEGKT), and D512. The tract at residues 864 to 913 (LDQPEEEPAEVEGQPDVAVASVRTEPKIGRNEPCPCGSGKKYKHCHGQVQ) is disordered. Zn(2+)-binding residues include C897, C899, C908, and H909. Over residues 903 to 913 (KKYKHCHGQVQ) the composition is skewed to basic residues.

It belongs to the SecA family. In terms of assembly, monomer and homodimer. Part of the essential Sec protein translocation apparatus which comprises SecA, SecYEG and auxiliary proteins SecDF-YajC and YidC. Zn(2+) serves as cofactor.

The protein localises to the cell inner membrane. It localises to the cytoplasm. The enzyme catalyses ATP + H2O + cellular proteinSide 1 = ADP + phosphate + cellular proteinSide 2.. In terms of biological role, part of the Sec protein translocase complex. Interacts with the SecYEG preprotein conducting channel. Has a central role in coupling the hydrolysis of ATP to the transfer of proteins into and across the cell membrane, serving both as a receptor for the preprotein-SecB complex and as an ATP-driven molecular motor driving the stepwise translocation of polypeptide chains across the membrane. The chain is Protein translocase subunit SecA from Stutzerimonas stutzeri (strain A1501) (Pseudomonas stutzeri).